The following is an 879-amino-acid chain: Alanine--tRNA ligase (879 aa).

Zn(2+)-binding residues include H570, H574, C672, and H676.

Belongs to the class-II aminoacyl-tRNA synthetase family. The cofactor is Zn(2+).

The protein resides in the cytoplasm. It catalyses the reaction tRNA(Ala) + L-alanine + ATP = L-alanyl-tRNA(Ala) + AMP + diphosphate. Its function is as follows. Catalyzes the attachment of alanine to tRNA(Ala) in a two-step reaction: alanine is first activated by ATP to form Ala-AMP and then transferred to the acceptor end of tRNA(Ala). Also edits incorrectly charged Ser-tRNA(Ala) and Gly-tRNA(Ala) via its editing domain. The polypeptide is Alanine--tRNA ligase (Nitratidesulfovibrio vulgaris (strain ATCC 29579 / DSM 644 / CCUG 34227 / NCIMB 8303 / VKM B-1760 / Hildenborough) (Desulfovibrio vulgaris)).